The primary structure comprises 244 residues: Ribosomal RNA small subunit methyltransferase NEP1 (244 aa).

The disordered stretch occupies residues 1–33 (MSAASGGFQPRERRFSVQEQDWETTPPKKLRLG). Phosphoserine occurs at positions 5 and 16. S-adenosyl-L-methionine contacts are provided by residues threonine 176, glycine 201, glycine 206, and 219–224 (ISNYPL).

The protein belongs to the class IV-like SAM-binding methyltransferase superfamily. RNA methyltransferase NEP1 family. In terms of assembly, homodimer. Part of the small subunit (SSU) processome, composed of more than 70 proteins and the RNA chaperone small nucleolar RNA (snoRNA) U3.

The protein resides in the nucleus. It is found in the nucleolus. It catalyses the reaction pseudouridine(1248) in human 18S rRNA + S-adenosyl-L-methionine = N(1)-methylpseudouridine(1248) in human 18S rRNA + S-adenosyl-L-homocysteine + H(+). Its function is as follows. S-adenosyl-L-methionine-dependent pseudouridine N(1)-methyltransferase that methylates pseudouridine at position in 18S rRNA. Involved the biosynthesis of the hypermodified N1-methyl-N3-(3-amino-3-carboxypropyl) pseudouridine (m1acp3-Psi) conserved in eukaryotic 18S rRNA. Is not able to methylate uridine at this position. Also has an essential role in 40S ribosomal subunit biogenesis independent on its methyltransferase activity, facilitating the incorporation of ribosomal protein S19 during the formation of pre-ribosomes. Part of the small subunit (SSU) processome, first precursor of the small eukaryotic ribosomal subunit. During the assembly of the SSU processome in the nucleolus, many ribosome biogenesis factors, an RNA chaperone and ribosomal proteins associate with the nascent pre-rRNA and work in concert to generate RNA folding, modifications, rearrangements and cleavage as well as targeted degradation of pre-ribosomal RNA by the RNA exosome. The chain is Ribosomal RNA small subunit methyltransferase NEP1 from Mus musculus (Mouse).